Here is a 1070-residue protein sequence, read N- to C-terminus: MKLKNLYIENIRSYKKLDFTFEDGVTVISGVNGSGKSSLLEACFMGLFGSKILSKDFVLADMIFKGAESAKIHLGFEHLGREYLIEQAFRYSLKSENASNSRCVLFADGENIVDQATRTYEEVCALLNMDEEAYRNCAYIRQGEIDVLINAKPRDRQRMIDDLLQLGKLEEYRERAGYAKTAVRRLERDAKNSFLGVKAEIEGIESTEPVAAVNRLRQKVKETDAILEELNKKKEFAAARKGELDLRIAEYRERLQEIEVLKQAIRKSQEDKAACFKEKETFSEEVQVQRRVLLELGEENSGMREECGFGDLEIEALLLQQEKSESSAREKVNSGSKELALLLKEEETGVQALRELEKDKVETERVLVECRTSIGAANKEIEGYRANIKQLEEENKRLREKAGFGAAGEIASVIKELEEKESLLRDRKNEVSTKLGFALKEKESGDASLRELDSEMQSCRVAVSKGKSEIEALEKEIRDNSKAVLDFQEQKSEVFAGLKALGFTEEQLENLEDFNELLLENKNRLHGKEKELEVTLREIENTLRKNRELLAEGKCPTCGQELKGSGIACTAEECEEKKEKLSLELADIKLQRAELEKKLNRLKEAKKLEKQAYDYDIEIEKLLEKAKASEKLIDTHRTRIEEDSLKLESSGKRKQELEAAGSKLLLDIKALREQEKAAQKVHLESEKALREAKVFERKLAENASEIESLNGKIRTSLALIENYGQRLGELNEKLKAFAEKETQSKEKLEALELTLETARKNEEEAKKAHIESARLLGEAKKLQANLLRMQNIKHKISEFEAGIGNLAEKIGFFDREIVERSDRIRQLEGKLEGNRLEELQQKLARFEEAQVNITEKIREITAEKDTLLKEIGMIENSLKRLKELKEELKALENKRLYLEAVYNNADELENTYMRVRADMRARNIGALSILLNEMFSFMYTNNAYSHIELDPEYNLTVYRKDGTPLEPKLLSGGERAIFNLVLRCAIYRLLALGFGGDRPDGLPPMILDEPTVFLDRGHVRQLLKLIDMMRSIGVGQIIVVSHDESLIDSADHVFQVEKDPLTNMSSITKI.

ATP-binding positions include Arg12, 32–38, and Gln142; that span reads NGSGKSS. 3 coiled-coil regions span residues 227–257, 369–403, and 449–478; these read LEELNKKKEFAAARKGELDLRIAEYRERLQE, ECRTSIGAANKEIEGYRANIKQLEEENKRLREKAG, and LRELDSEMQSCRVAVSKGKSEIEALEKEIR. One can recognise a Zinc-hook domain in the interval 508 to 607; sequence LENLEDFNEL…KLNRLKEAKK (100 aa). Residues Cys555 and Cys558 each contribute to the Zn(2+) site. Coiled-coil stretches lie at residues 570–614 and 878–908; these read TAEE…QAYD and LKRLKELKEELKALENKRLYLEAVYNNADEL. Residue 969–974 participates in ATP binding; that stretch reads LLSGGE.

Belongs to the SMC family. RAD50 subfamily. Homodimer. Forms a heterotetramer composed of two Mre11 subunits and two Rad50 subunits. Requires Zn(2+) as cofactor.

Part of the Rad50/Mre11 complex, which is involved in the early steps of DNA double-strand break (DSB) repair. The complex may facilitate opening of the processed DNA ends to aid in the recruitment of HerA and NurA. Rad50 controls the balance between DNA end bridging and DNA resection via ATP-dependent structural rearrangements of the Rad50/Mre11 complex. This is DNA double-strand break repair Rad50 ATPase from Methanosarcina mazei (strain ATCC BAA-159 / DSM 3647 / Goe1 / Go1 / JCM 11833 / OCM 88) (Methanosarcina frisia).